Consider the following 134-residue polypeptide: CDGSH iron-sulfur domain-containing protein 2 homolog (134 aa).

The Lumenal portion of the chain corresponds to 1–35 (MESLSQLVKSTLPNYLSNLPIPDSVGGWFKLSFKD). Residues 36–58 (WLALIPPTVVVAGIGYTGYLAFC) form a helical membrane-spanning segment. Residues 59–134 (PAAQARCSAT…NVGPVVVKKQ (76 aa)) lie on the Cytoplasmic side of the membrane. Residues C100, C102, C111, and H115 each contribute to the [2Fe-2S] cluster site.

The protein belongs to the CISD protein family. CISD2 subfamily. It depends on [2Fe-2S] cluster as a cofactor.

It localises to the endoplasmic reticulum membrane. The polypeptide is CDGSH iron-sulfur domain-containing protein 2 homolog (Drosophila ananassae (Fruit fly)).